The sequence spans 116 residues: Holo-[acyl-carrier-protein] synthase (116 aa).

Asp-8 and Glu-50 together coordinate Mg(2+).

It belongs to the P-Pant transferase superfamily. AcpS family. It depends on Mg(2+) as a cofactor.

It is found in the cytoplasm. The enzyme catalyses apo-[ACP] + CoA = holo-[ACP] + adenosine 3',5'-bisphosphate + H(+). Its function is as follows. Transfers the 4'-phosphopantetheine moiety from coenzyme A to a Ser of acyl-carrier-protein. In Beutenbergia cavernae (strain ATCC BAA-8 / DSM 12333 / CCUG 43141 / JCM 11478 / NBRC 16432 / NCIMB 13614 / HKI 0122), this protein is Holo-[acyl-carrier-protein] synthase.